The primary structure comprises 521 residues: MIRISIGVNRRLRYQFSSFAGYSGSENPRLFKTLGAANTPIPHRRNPEPKGQDLDFVNVAHSHLIQSDWDKLNKLSDHLDSFRVKNVLLKIQKDYLLSLEFFNWAKTRNPGSHSLETHAIVLHTLTKNRKFKSAESILRDVLVNGGVDLPAKVFDALLYSYRECDSTPRVFDSLFKTFAHLKKFRNATDTFMQMKDYGFLPTVESCNAYMSSLLGQGRVDIALRFYREMRRCKISPNPYTLNMVMSGYCRSGKLDKGIELLQDMERLGFRATDVSYNTLIAGHCEKGLLSSALKLKNMMGKSGLQPNVVTFNTLIHGFCRAMKLQEASKVFGEMKAVNVAPNTVTYNTLINGYSQQGDHEMAFRFYEDMVCNGIQRDILTYNALIFGLCKQAKTRKAAQFVKELDKENLVPNSSTFSALIMGQCVRKNADRGFELYKSMIRSGCHPNEQTFNMLVSAFCRNEDFDGASQVLREMVRRSIPLDSRTVHQVCNGLKHQGKDQLVKKLLQEMEGKKFLQESFNN.

Residues 1 to 38 constitute a mitochondrion transit peptide; it reads MIRISIGVNRRLRYQFSSFAGYSGSENPRLFKTLGAAN. PPR repeat units lie at residues 167–201, 202–236, 237–271, 272–306, 307–341, 342–376, 377–411, 412–446, 447–481, and 482–516; these read TPRV…GFLP, TVES…KISP, NPYT…GFRA, TDVS…GLQP, NVVT…NVAP, NTVT…GIQR, DILT…NLVP, NSST…GCHP, NEQT…SIPL, and DSRT…KFLQ.

This sequence belongs to the PPR family. P subfamily.

It is found in the mitochondrion. This chain is Pentatricopeptide repeat-containing protein At4g26680, mitochondrial, found in Arabidopsis thaliana (Mouse-ear cress).